The sequence spans 160 residues: Small ribosomal subunit protein uS7 (160 aa).

The protein belongs to the universal ribosomal protein uS7 family. As to quaternary structure, part of the 30S ribosomal subunit. Contacts proteins S9 and S11.

Functionally, one of the primary rRNA binding proteins, it binds directly to 16S rRNA where it nucleates assembly of the head domain of the 30S subunit. Is located at the subunit interface close to the decoding center, probably blocks exit of the E-site tRNA. In Rickettsia canadensis (strain McKiel), this protein is Small ribosomal subunit protein uS7.